Consider the following 117-residue polypeptide: Large ribosomal subunit protein bL20c (117 aa).

Belongs to the bacterial ribosomal protein bL20 family.

Its subcellular location is the plastid. The protein resides in the chloroplast. Binds directly to 23S ribosomal RNA and is necessary for the in vitro assembly process of the 50S ribosomal subunit. It is not involved in the protein synthesizing functions of that subunit. This is Large ribosomal subunit protein bL20c from Chloranthus spicatus (Chulantree).